Here is a 314-residue protein sequence, read N- to C-terminus: N-alpha-acetyltransferase 80 (314 aa).

Positions 90-243 constitute an N-acetyltransferase domain; it reads LEPVHCRPEL…TTVLRAFSKP (154 aa). Substrate contacts are provided by residues R113 and 118-121; that span reads RLHS. Residues 169–171, 177–182, and Q207 contribute to the acetyl-CoA site; these read VVV and GRGFGR. The interval 260 to 295 is disordered; sequence VPRSSKGPPLPPPPPLPQSLTASPPPSPEPLPQSPL. The segment covering 267–292 has biased composition (pro residues); that stretch reads PPLPPPPPLPQSLTASPPPSPEPLPQ.

This sequence belongs to the acetyltransferase family.

The protein resides in the cytoplasm. It is found in the cytosol. The enzyme catalyses N-terminal L-aspartyl-L-aspartyl-L-aspartyl-[protein] + acetyl-CoA = N-terminal N-acetyl-L-aspartyl-L-aspartyl-L-aspartyl-[protein] + CoA + H(+). The catalysed reaction is N-terminal L-glutamyl-L-glutamyl-L-glutamyl-[protein] + acetyl-CoA = N-terminal N-acetyl-L-glutamyl-L-glutamyl-L-glutamyl-[protein] + CoA + H(+). In terms of biological role, N-alpha-acetyltransferase that specifically mediates the acetylation of the acidic amino terminus of processed forms of beta- and gamma-actin (ACTB and ACTG, respectively). N-terminal acetylation of processed beta- and gamma-actin regulates actin filament depolymerization and elongation. In vivo, preferentially displays N-terminal acetyltransferase activity towards acid N-terminal sequences starting with Asp-Asp-Asp and Glu-Glu-Glu. In vitro, shows high activity towards Met-Asp-Glu-Leu and Met-Asp-Asp-Asp. May act as a tumor suppressor. This chain is N-alpha-acetyltransferase 80, found in Mus musculus (Mouse).